Reading from the N-terminus, the 396-residue chain is F-box protein At2g21930 (396 aa).

An F-box domain is found at 19–65 (SGNSVQIPFDLIPEILKRLPVKTLARFLSVSKEYTSIIRNRDFMKSY).

The polypeptide is F-box protein At2g21930 (Arabidopsis thaliana (Mouse-ear cress)).